The primary structure comprises 877 residues: Putative leucine-rich repeat receptor-like serine/threonine-protein kinase At2g19230 (877 aa).

The signal sequence occupies residues 1–24 (MGNFNFLPLVSFASFVVVLVLVCA). The Extracellular segment spans residues 25–517 (QDQSGFVSID…RNKKTERKEY (493 aa)). 6 N-linked (GlcNAc...) asparagine glycosylation sites follow: N142, N233, N261, N295, N405, and N420. LRR repeat units lie at residues 439-462 (PLQKLDLSNNRLTGTVPDFLANLP) and 463-484 (DLTELNLEENKLTGILPEKLLE). A helical membrane pass occupies residues 518–538 (IIPSVASVTGLFFLLLALISF). At 539–877 (WQFKKRQQSV…VDPGVLPQPR (339 aa)) the chain is on the cytoplasmic side. The Protein kinase domain occupies 569–842 (NNFERVLGQG…QVVAELKESL (274 aa)). ATP contacts are provided by residues 575 to 583 (LGQGGFGKV) and K596. Y641 is modified (phosphotyrosine). The active-site Proton acceptor is D692. Position 726 is a phosphoserine (S726). Residues T727 and T732 each carry the phosphothreonine modification.

Belongs to the protein kinase superfamily. Ser/Thr protein kinase family.

The protein localises to the cell membrane. The enzyme catalyses L-seryl-[protein] + ATP = O-phospho-L-seryl-[protein] + ADP + H(+). It catalyses the reaction L-threonyl-[protein] + ATP = O-phospho-L-threonyl-[protein] + ADP + H(+). This Arabidopsis thaliana (Mouse-ear cress) protein is Putative leucine-rich repeat receptor-like serine/threonine-protein kinase At2g19230.